The following is a 331-amino-acid chain: Anthranilate phosphoribosyltransferase (331 aa).

Residues glycine 79, 82–83 (GD), threonine 87, 89–92 (NVST), 107–115 (KHGNYGVSS), and serine 119 each bind 5-phospho-alpha-D-ribose 1-diphosphate. Glycine 79 contacts anthranilate. A Mg(2+)-binding site is contributed by serine 91. Anthranilate is bound at residue asparagine 110. Arginine 165 lines the anthranilate pocket. Residues aspartate 223 and glutamate 224 each contribute to the Mg(2+) site.

This sequence belongs to the anthranilate phosphoribosyltransferase family. As to quaternary structure, homodimer. Requires Mg(2+) as cofactor.

The catalysed reaction is N-(5-phospho-beta-D-ribosyl)anthranilate + diphosphate = 5-phospho-alpha-D-ribose 1-diphosphate + anthranilate. It functions in the pathway amino-acid biosynthesis; L-tryptophan biosynthesis; L-tryptophan from chorismate: step 2/5. Functionally, catalyzes the transfer of the phosphoribosyl group of 5-phosphorylribose-1-pyrophosphate (PRPP) to anthranilate to yield N-(5'-phosphoribosyl)-anthranilate (PRA). The chain is Anthranilate phosphoribosyltransferase from Christiangramia forsetii (strain DSM 17595 / CGMCC 1.15422 / KT0803) (Gramella forsetii).